Reading from the N-terminus, the 226-residue chain is 2-C-methyl-D-erythritol 4-phosphate cytidylyltransferase (226 aa).

This sequence belongs to the IspD/TarI cytidylyltransferase family. IspD subfamily.

It carries out the reaction 2-C-methyl-D-erythritol 4-phosphate + CTP + H(+) = 4-CDP-2-C-methyl-D-erythritol + diphosphate. The protein operates within isoprenoid biosynthesis; isopentenyl diphosphate biosynthesis via DXP pathway; isopentenyl diphosphate from 1-deoxy-D-xylulose 5-phosphate: step 2/6. Its function is as follows. Catalyzes the formation of 4-diphosphocytidyl-2-C-methyl-D-erythritol from CTP and 2-C-methyl-D-erythritol 4-phosphate (MEP). The polypeptide is 2-C-methyl-D-erythritol 4-phosphate cytidylyltransferase (Bacillus cereus (strain ATCC 10987 / NRS 248)).